The primary structure comprises 413 residues: CinA-like protein (413 aa).

Belongs to the CinA family.

This chain is CinA-like protein, found in Geobacter sulfurreducens (strain ATCC 51573 / DSM 12127 / PCA).